Here is a 270-residue protein sequence, read N- to C-terminus: Glutamate 5-kinase (270 aa).

An ATP-binding site is contributed by lysine 17. Substrate-binding residues include serine 57, aspartate 144, and asparagine 160. Residues serine 180–aspartate 181 and threonine 222–lysine 228 each bind ATP.

It belongs to the glutamate 5-kinase family.

It localises to the cytoplasm. The enzyme catalyses L-glutamate + ATP = L-glutamyl 5-phosphate + ADP. Its pathway is amino-acid biosynthesis; L-proline biosynthesis; L-glutamate 5-semialdehyde from L-glutamate: step 1/2. Its function is as follows. Catalyzes the transfer of a phosphate group to glutamate to form L-glutamate 5-phosphate. The protein is Glutamate 5-kinase of Lactococcus lactis subsp. cremoris (strain SK11).